Consider the following 190-residue polypeptide: Potassium-transporting ATPase KdpC subunit (190 aa).

The helical transmembrane segment at 15–35 (LWILTALIYPAIVLVIGQLVF) threads the bilayer.

Belongs to the KdpC family. As to quaternary structure, the system is composed of three essential subunits: KdpA, KdpB and KdpC.

It is found in the cell inner membrane. Functionally, part of the high-affinity ATP-driven potassium transport (or Kdp) system, which catalyzes the hydrolysis of ATP coupled with the electrogenic transport of potassium into the cytoplasm. This subunit acts as a catalytic chaperone that increases the ATP-binding affinity of the ATP-hydrolyzing subunit KdpB by the formation of a transient KdpB/KdpC/ATP ternary complex. The polypeptide is Potassium-transporting ATPase KdpC subunit (Synechocystis sp. (strain ATCC 27184 / PCC 6803 / Kazusa)).